The primary structure comprises 381 residues: Queuine tRNA-ribosyltransferase (381 aa).

Catalysis depends on aspartate 92, which acts as the Proton acceptor. Residues 92-96 (DSGGF), aspartate 146, glutamine 190, and glycine 217 contribute to the substrate site. Positions 248 to 254 (GVGRPED) are RNA binding. Aspartate 267 functions as the Nucleophile in the catalytic mechanism. Residues 272-276 (TRNAR) are RNA binding; important for wobble base 34 recognition. 4 residues coordinate Zn(2+): cysteine 305, cysteine 307, cysteine 310, and histidine 337.

Belongs to the queuine tRNA-ribosyltransferase family. Homodimer. Within each dimer, one monomer is responsible for RNA recognition and catalysis, while the other monomer binds to the replacement base PreQ1. Zn(2+) serves as cofactor.

It catalyses the reaction 7-aminomethyl-7-carbaguanine + guanosine(34) in tRNA = 7-aminomethyl-7-carbaguanosine(34) in tRNA + guanine. It participates in tRNA modification; tRNA-queuosine biosynthesis. Catalyzes the base-exchange of a guanine (G) residue with the queuine precursor 7-aminomethyl-7-deazaguanine (PreQ1) at position 34 (anticodon wobble position) in tRNAs with GU(N) anticodons (tRNA-Asp, -Asn, -His and -Tyr). Catalysis occurs through a double-displacement mechanism. The nucleophile active site attacks the C1' of nucleotide 34 to detach the guanine base from the RNA, forming a covalent enzyme-RNA intermediate. The proton acceptor active site deprotonates the incoming PreQ1, allowing a nucleophilic attack on the C1' of the ribose to form the product. After dissociation, two additional enzymatic reactions on the tRNA convert PreQ1 to queuine (Q), resulting in the hypermodified nucleoside queuosine (7-(((4,5-cis-dihydroxy-2-cyclopenten-1-yl)amino)methyl)-7-deazaguanosine). The polypeptide is Queuine tRNA-ribosyltransferase (Xanthomonas oryzae pv. oryzae (strain MAFF 311018)).